The sequence spans 332 residues: Iron-utilization periplasmic protein (332 aa).

Residues M1 to A23 form the signal peptide. Residues H32, E80, Y218, and Y219 each coordinate Fe cation.

It belongs to the bacterial solute-binding protein 1 family. As to quaternary structure, the complex is composed of two ATP-binding proteins (FbpC), two transmembrane proteins (FbpB) and a solute-binding protein (FbpA).

The protein localises to the periplasm. Its function is as follows. Part of the ABC transporter complex FbpABC (TC 3.A.1.10.1) involved in Fe(3+) ions import. This protein specifically binds Fe(3+) and is involved in its transmembrane transport. The chain is Iron-utilization periplasmic protein (fbpA) from Haemophilus influenzae (strain ATCC 51907 / DSM 11121 / KW20 / Rd).